A 210-amino-acid chain; its full sequence is Protein GET1 (210 aa).

The Lumenal portion of the chain corresponds to 1 to 4 (MPSL). Residues 5 to 24 (LIIVLIIHVVTYLINTIGAN) form a helical membrane-spanning segment. The Cytoplasmic segment spans residues 25-110 (TIDSLLWLLY…SFDLAVKSVR (86 aa)). Residues 39–95 (NQTSQTADEQRRLKREVMQLKREMNATSSQDEFAKWAKLRRRHDKTMEEYEAKNKAL) are a coiled coil. The chain crosses the membrane as a helical span at residues 111–131 (FFSTTGLKLFLQFWFSKTPIF). Residues 132-155 (ELPRGWIPWQVEWVLSFPRAPLGT) lie on the Lumenal side of the membrane. A helical transmembrane segment spans residues 156–172 (VSIQIWGGVCATVVSLA). The Cytoplasmic segment spans residues 173–210 (GDAIGVVNVYLTSKAPKQKEPATSGENSARPMAIKKEL). Positions 189–210 (KQKEPATSGENSARPMAIKKEL) are disordered.

It belongs to the WRB/GET1 family. As to quaternary structure, interacts with GET3.

Its subcellular location is the endoplasmic reticulum membrane. Required for the post-translational delivery of tail-anchored (TA) proteins to the endoplasmic reticulum. Acts as a membrane receptor for soluble GET3, which recognizes and selectively binds the transmembrane domain of TA proteins in the cytosol. This Coccidioides posadasii (strain C735) (Valley fever fungus) protein is Protein GET1.